The sequence spans 125 residues: Holo-[acyl-carrier-protein] synthase (125 aa).

Mg(2+)-binding residues include Asp-9 and Glu-58.

The protein belongs to the P-Pant transferase superfamily. AcpS family. Mg(2+) is required as a cofactor.

Its subcellular location is the cytoplasm. It carries out the reaction apo-[ACP] + CoA = holo-[ACP] + adenosine 3',5'-bisphosphate + H(+). Functionally, transfers the 4'-phosphopantetheine moiety from coenzyme A to a Ser of acyl-carrier-protein. The chain is Holo-[acyl-carrier-protein] synthase from Shewanella amazonensis (strain ATCC BAA-1098 / SB2B).